Consider the following 257-residue polypeptide: Putative hydro-lyase Bphy_2364 (257 aa).

Belongs to the D-glutamate cyclase family.

In Paraburkholderia phymatum (strain DSM 17167 / CIP 108236 / LMG 21445 / STM815) (Burkholderia phymatum), this protein is Putative hydro-lyase Bphy_2364.